Consider the following 296-residue polypeptide: MDGDGDPESVGQPEEASPEEQPEEASAEEERPEDQQEEEAAAAAAYLDELPEPLLLRVLAALPAAELVQACRLVCLRWKELVDGAPLWLLKCQQEGLVPEGGVEEERDHWQQFYFLSKRRRNLLRNPCGEEDLEGWCDVEHGGDGWRVEELPGDSGVEFTHDESVKKYFASSFEWCRKAQVIDLQAEGYWEELLDTTQPAIVVKDWYSGRSDAGCLYELTVKLLSEHENVLAEFSSGQVAVPQDSDGGGWMEISHTFTDYGPGVRFVRFEHGGQDSVYWKGWFGARVTNSSVWVEP.

Residues 1-41 (MDGDGDPESVGQPEEASPEEQPEEASAEEERPEDQQEEEAA) are disordered. Acidic residues predominate over residues 16–40 (ASPEEQPEEASAEEERPEDQQEEEA). One can recognise an F-box domain in the interval 44-91 (AAYLDELPEPLLLRVLAALPAAELVQACRLVCLRWKELVDGAPLWLLK). Positions 113–296 (FYFLSKRRRN…VTNSSVWVEP (184 aa)) constitute an FBA domain. A carbohydrate contacts are provided by residues 210-212 (RSD) and 278-279 (YW).

Component of the SCF(FBXO2) complex consisting of CUL1, RBX1, SKP1 and FBXO2. Predominantly detected as heterodimer with SKP1; the heterodimer with SKP1 is not part of the SCF(FBXO2) complex.

It localises to the cytoplasm. It is found in the microsome membrane. The protein operates within protein modification; protein ubiquitination. Substrate recognition component of a SCF (SKP1-CUL1-F-box protein) E3 ubiquitin-protein ligase complex that mediates the ubiquitination and subsequent proteasomal degradation of target proteins. Involved in the endoplasmic reticulum-associated degradation pathway (ERAD) for misfolded lumenal proteins by recognizing and binding sugar chains on unfolded glycoproteins that are retrotranslocated into the cytosol and promoting their ubiquitination and subsequent degradation. Prevents formation of cytosolic aggregates of unfolded glycoproteins that have been retrotranslocated into the cytosol. Able to recognize and bind denatured glycoproteins, preferentially those of the high-mannose type. The chain is F-box only protein 2 (FBXO2) from Homo sapiens (Human).